The chain runs to 387 residues: 3-ketoacyl-CoA thiolase (387 aa).

Cys-91 acts as the Acyl-thioester intermediate in catalysis. Catalysis depends on proton acceptor residues His-343 and Cys-373.

Belongs to the thiolase-like superfamily. Thiolase family. Heterotetramer of two alpha chains (FadB) and two beta chains (FadA).

It localises to the cytoplasm. It carries out the reaction an acyl-CoA + acetyl-CoA = a 3-oxoacyl-CoA + CoA. The protein operates within lipid metabolism; fatty acid beta-oxidation. Functionally, catalyzes the final step of fatty acid oxidation in which acetyl-CoA is released and the CoA ester of a fatty acid two carbons shorter is formed. This Shigella boydii serotype 4 (strain Sb227) protein is 3-ketoacyl-CoA thiolase.